The chain runs to 39 residues: Cytochrome b6-f complex subunit 5 (39 aa).

Residues 5-25 traverse the membrane as a helical segment; that stretch reads LLCGIVLGLVPVTLLGLFVSA.

The protein belongs to the PetG family. The 4 large subunits of the cytochrome b6-f complex are cytochrome b6, subunit IV (17 kDa polypeptide, PetD), cytochrome f and the Rieske protein, while the 4 small subunits are PetG, PetL, PetM and PetN. The complex functions as a dimer.

The protein resides in the cellular thylakoid membrane. In terms of biological role, component of the cytochrome b6-f complex, which mediates electron transfer between photosystem II (PSII) and photosystem I (PSI), cyclic electron flow around PSI, and state transitions. PetG is required for either the stability or assembly of the cytochrome b6-f complex. In Prochlorococcus marinus (strain NATL1A), this protein is Cytochrome b6-f complex subunit 5.